The chain runs to 308 residues: Aspartate carbamoyltransferase catalytic subunit (308 aa).

R59 and T60 together coordinate carbamoyl phosphate. K87 is a binding site for L-aspartate. Residues R109, H139, and Q142 each coordinate carbamoyl phosphate. Positions 172 and 224 each coordinate L-aspartate. Residues A265 and P266 each coordinate carbamoyl phosphate.

This sequence belongs to the aspartate/ornithine carbamoyltransferase superfamily. ATCase family. Heterododecamer (2C3:3R2) of six catalytic PyrB chains organized as two trimers (C3), and six regulatory PyrI chains organized as three dimers (R2).

It carries out the reaction carbamoyl phosphate + L-aspartate = N-carbamoyl-L-aspartate + phosphate + H(+). Its pathway is pyrimidine metabolism; UMP biosynthesis via de novo pathway; (S)-dihydroorotate from bicarbonate: step 2/3. Its function is as follows. Catalyzes the condensation of carbamoyl phosphate and aspartate to form carbamoyl aspartate and inorganic phosphate, the committed step in the de novo pyrimidine nucleotide biosynthesis pathway. The chain is Aspartate carbamoyltransferase catalytic subunit from Streptococcus mutans serotype c (strain ATCC 700610 / UA159).